We begin with the raw amino-acid sequence, 545 residues long: T-complex protein 1 subunit gamma (545 aa).

Methionine 1 bears the N-acetylmethionine mark. Residues 1–24 (MMGHRPVLVLSQNTKRESGRKVQS) are disordered. Serine 11 carries the post-translational modification Phosphoserine. Lysine 15 is covalently cross-linked (Glycyl lysine isopeptide (Lys-Gly) (interchain with G-Cter in SUMO2)). An ADP-binding site is contributed by glycine 42. Position 42 (glycine 42) interacts with ATP. Residue aspartate 93 participates in Mg(2+) binding. ADP is bound by residues glycine 94, threonine 95, threonine 96, serine 97, threonine 162, and lysine 163. 3 residues coordinate ATP: glycine 94, threonine 95, and threonine 96. The residue at position 170 (serine 170) is a Phosphoserine. At lysine 222 the chain carries N6-acetyllysine. 2 positions are modified to phosphoserine: serine 243 and serine 244. Tyrosine 247 bears the Phosphotyrosine mark. Glycyl lysine isopeptide (Lys-Gly) (interchain with G-Cter in SUMO2) cross-links involve residues lysine 248 and lysine 249. Serine 252 carries the post-translational modification Phosphoserine. Cysteines 366 and 372 form a disulfide. Residue lysine 381 forms a Glycyl lysine isopeptide (Lys-Gly) (interchain with G-Cter in SUMO2) linkage. Glycine 411 is an ADP binding site. Position 411 (glycine 411) interacts with ATP. Phosphothreonine is present on residues threonine 430 and threonine 459. The ADP site is built by glycine 482, glutamate 483, glutamate 497, and lysine 502. An ATP-binding site is contributed by glycine 482. Glutamate 497 contributes to the ATP binding site. Positions 526–545 (HKKKGDDQSRQGGAPDAGQE) are disordered.

This sequence belongs to the TCP-1 chaperonin family. In terms of assembly, component of the chaperonin-containing T-complex (TRiC), a hexadecamer composed of two identical back-to-back stacked rings enclosing a protein folding chamber. Each ring is made up of eight different subunits: TCP1/CCT1, CCT2, CCT3, CCT4, CCT5, CCT6A/CCT6, CCT7, CCT8. Interacts with PACRG. Interacts with DNAAF4. Interacts with DLEC1.

It is found in the cytoplasm. It carries out the reaction ATP + H2O = ADP + phosphate + H(+). In terms of biological role, component of the chaperonin-containing T-complex (TRiC), a molecular chaperone complex that assists the folding of actin, tubulin and other proteins upon ATP hydrolysis. The TRiC complex mediates the folding of WRAP53/TCAB1, thereby regulating telomere maintenance. As part of the TRiC complex may play a role in the assembly of BBSome, a complex involved in ciliogenesis regulating transports vesicles to the cilia. The chain is T-complex protein 1 subunit gamma (CCT3) from Pongo abelii (Sumatran orangutan).